The primary structure comprises 139 residues: MKHYELLFILKPTLTEEEVKAKVDFVKEVITKNGGEIATVIEMGTRKLAYTIKKYERGTYFVIYYKAPPALLAELTRNVRITEDIIRFLSVKYENKREIAAWERLCKGIKQTIKKEPREPRAPREPRVEKVDEQTFTEE.

The segment covering 114–133 has biased composition (basic and acidic residues); that stretch reads KKEPREPRAPREPRVEKVDE. The disordered stretch occupies residues 114–139; sequence KKEPREPRAPREPRVEKVDEQTFTEE.

The protein belongs to the bacterial ribosomal protein bS6 family.

Functionally, binds together with bS18 to 16S ribosomal RNA. The sequence is that of Small ribosomal subunit protein bS6 from Campylobacter concisus (strain 13826).